The sequence spans 286 residues: Transcription factor bHLH137 (286 aa).

Polar residues predominate over residues 63 to 84; sequence SGSEKLANTTKTATTGSSSCDQ. The interval 63–149 is disordered; it reads SGSEKLANTT…RGQATDSHSL (87 aa). Residues 142-192 enclose the bHLH domain; the sequence is QATDSHSLAERVRREKISERMRTLQNLVPGCDKVTGKALMLDEIINYVQTL.

As to quaternary structure, homodimer.

It localises to the nucleus. The sequence is that of Transcription factor bHLH137 (BHLH137) from Arabidopsis thaliana (Mouse-ear cress).